The chain runs to 250 residues: Triosephosphate isomerase, glycosomal (250 aa).

The substrate site is built by Asn11 and Lys13. His95 acts as the Electrophile in catalysis. The Proton acceptor role is filled by Glu167.

This sequence belongs to the triosephosphate isomerase family. In terms of assembly, homodimer.

It is found in the glycosome. The catalysed reaction is D-glyceraldehyde 3-phosphate = dihydroxyacetone phosphate. The protein operates within carbohydrate biosynthesis; gluconeogenesis. Its pathway is carbohydrate degradation; glycolysis; D-glyceraldehyde 3-phosphate from glycerone phosphate: step 1/1. This is Triosephosphate isomerase, glycosomal from Trypanosoma brucei brucei.